The primary structure comprises 258 residues: Snake venom serine protease 1 (258 aa).

An N-terminal signal peptide occupies residues 1–18; that stretch reads MVLIRVLANLLILQLSYA. A propeptide spanning residues 19–24 is cleaved from the precursor; it reads QKSSEL. The 225-residue stretch at 25 to 249 folds into the Peptidase S1 domain; that stretch reads VVGGDECNIN…YNDWIKSIIA (225 aa). Disulfide bonds link Cys-31-Cys-163, Cys-50-Cys-66, Cys-98-Cys-256, Cys-142-Cys-210, Cys-174-Cys-189, and Cys-200-Cys-225. An N-linked (GlcNAc...) asparagine glycan is attached at Asn-44. Residues His-65 and Asp-110 each act as charge relay system in the active site. The Charge relay system role is filled by Ser-204.

It belongs to the peptidase S1 family. Snake venom subfamily. In terms of assembly, monomer. In terms of tissue distribution, expressed by the venom gland.

It is found in the secreted. Snake venom serine protease that may act in the hemostasis system of the prey. The chain is Snake venom serine protease 1 (TLG1) from Craspedocephalus gramineus (Bamboo pit viper).